The chain runs to 175 residues: ATP-dependent protease subunit HslV (175 aa).

Thr-2 is an active-site residue. Residues Gly-158, Cys-161, and Thr-164 each contribute to the Na(+) site.

Belongs to the peptidase T1B family. HslV subfamily. As to quaternary structure, a double ring-shaped homohexamer of HslV is capped on each side by a ring-shaped HslU homohexamer. The assembly of the HslU/HslV complex is dependent on binding of ATP.

It is found in the cytoplasm. It catalyses the reaction ATP-dependent cleavage of peptide bonds with broad specificity.. Allosterically activated by HslU binding. Its function is as follows. Protease subunit of a proteasome-like degradation complex believed to be a general protein degrading machinery. The protein is ATP-dependent protease subunit HslV of Haemophilus influenzae (strain ATCC 51907 / DSM 11121 / KW20 / Rd).